We begin with the raw amino-acid sequence, 606 residues long: Elongation factor 4 (606 aa).

A tr-type G domain is found at 11-193 (PHIRNFSIIA…RLVRDVPPPK (183 aa)). GTP contacts are provided by residues 23–28 (DHGKST) and 140–143 (NKMD).

This sequence belongs to the TRAFAC class translation factor GTPase superfamily. Classic translation factor GTPase family. LepA subfamily.

The protein resides in the cell inner membrane. It catalyses the reaction GTP + H2O = GDP + phosphate + H(+). Functionally, required for accurate and efficient protein synthesis under certain stress conditions. May act as a fidelity factor of the translation reaction, by catalyzing a one-codon backward translocation of tRNAs on improperly translocated ribosomes. Back-translocation proceeds from a post-translocation (POST) complex to a pre-translocation (PRE) complex, thus giving elongation factor G a second chance to translocate the tRNAs correctly. Binds to ribosomes in a GTP-dependent manner. This is Elongation factor 4 from Chromohalobacter salexigens (strain ATCC BAA-138 / DSM 3043 / CIP 106854 / NCIMB 13768 / 1H11).